The following is a 301-amino-acid chain: GTPase Era (301 aa).

Positions 4-173 (KAGFVALIGK…LECISKHLNP (170 aa)) constitute an Era-type G domain. The interval 12–19 (GKPNAGKS) is G1. 12-19 (GKPNAGKS) lines the GTP pocket. Positions 38-42 (NATRK) are G2. Positions 64–67 (DTPG) are G3. GTP contacts are provided by residues 64 to 68 (DTPGL) and 122 to 125 (SKID). A G4 region spans residues 122 to 125 (SKID). A G5 region spans residues 152–154 (LSA). One can recognise a KH type-2 domain in the interval 204–280 (LSDEIPYESD…FLNLQVIAQK (77 aa)).

The protein belongs to the TRAFAC class TrmE-Era-EngA-EngB-Septin-like GTPase superfamily. Era GTPase family. As to quaternary structure, monomer.

It localises to the cytoplasm. It is found in the cell inner membrane. Its function is as follows. An essential GTPase that binds both GDP and GTP, with rapid nucleotide exchange. Plays a role in 16S rRNA processing and 30S ribosomal subunit biogenesis and possibly also in cell cycle regulation and energy metabolism. This chain is GTPase Era, found in Helicobacter pylori (strain P12).